We begin with the raw amino-acid sequence, 120 residues long: Large ribosomal subunit protein uL18 (120 aa).

It belongs to the universal ribosomal protein uL18 family. In terms of assembly, part of the 50S ribosomal subunit; part of the 5S rRNA/L5/L18/L25 subcomplex. Contacts the 5S and 23S rRNAs.

Functionally, this is one of the proteins that bind and probably mediate the attachment of the 5S RNA into the large ribosomal subunit, where it forms part of the central protuberance. In Oleidesulfovibrio alaskensis (strain ATCC BAA-1058 / DSM 17464 / G20) (Desulfovibrio alaskensis), this protein is Large ribosomal subunit protein uL18.